A 347-amino-acid polypeptide reads, in one-letter code: GMP reductase (347 aa).

108–131 (ADFEKTKQILDLNPALNFVCIDVA) contributes to the NADP(+) binding site. Residues glycine 181 and glycine 183 each coordinate K(+). The active-site Thioimidate intermediate is cysteine 186. An NADP(+)-binding site is contributed by 216–239 (IVSDGGCTTPGDVAKAFGGGADFV).

The protein belongs to the IMPDH/GMPR family. GuaC type 1 subfamily. As to quaternary structure, homotetramer.

The catalysed reaction is IMP + NH4(+) + NADP(+) = GMP + NADPH + 2 H(+). Catalyzes the irreversible NADPH-dependent deamination of GMP to IMP. It functions in the conversion of nucleobase, nucleoside and nucleotide derivatives of G to A nucleotides, and in maintaining the intracellular balance of A and G nucleotides. This Shigella dysenteriae serotype 1 (strain Sd197) protein is GMP reductase.